A 1400-amino-acid chain; its full sequence is DNA-directed RNA polymerase subunit beta' (1400 aa).

Residues C71, C73, C86, and C89 each coordinate Zn(2+). Mg(2+) is bound by residues D462, D464, and D466. 4 residues coordinate Zn(2+): C811, C885, C892, and C895.

This sequence belongs to the RNA polymerase beta' chain family. As to quaternary structure, the RNAP catalytic core consists of 2 alpha, 1 beta, 1 beta' and 1 omega subunit. When a sigma factor is associated with the core the holoenzyme is formed, which can initiate transcription. It depends on Mg(2+) as a cofactor. Requires Zn(2+) as cofactor.

The catalysed reaction is RNA(n) + a ribonucleoside 5'-triphosphate = RNA(n+1) + diphosphate. In terms of biological role, DNA-dependent RNA polymerase catalyzes the transcription of DNA into RNA using the four ribonucleoside triphosphates as substrates. The protein is DNA-directed RNA polymerase subunit beta' of Brucella abortus (strain S19).